A 135-amino-acid polypeptide reads, in one-letter code: Large ribosomal subunit protein uL16c (135 aa).

It belongs to the universal ribosomal protein uL16 family. As to quaternary structure, part of the 50S ribosomal subunit.

It is found in the plastid. The protein resides in the chloroplast. This Lactuca sativa (Garden lettuce) protein is Large ribosomal subunit protein uL16c.